Consider the following 117-residue polypeptide: Large ribosomal subunit protein bL20 (117 aa).

This sequence belongs to the bacterial ribosomal protein bL20 family.

Its function is as follows. Binds directly to 23S ribosomal RNA and is necessary for the in vitro assembly process of the 50S ribosomal subunit. It is not involved in the protein synthesizing functions of that subunit. This chain is Large ribosomal subunit protein bL20, found in Solidesulfovibrio magneticus (strain ATCC 700980 / DSM 13731 / RS-1) (Desulfovibrio magneticus).